Reading from the N-terminus, the 387-residue chain is 8-amino-7-oxononanoate synthase (387 aa).

Arg-19 serves as a coordination point for substrate. Residue 106–107 (GY) participates in pyridoxal 5'-phosphate binding. Substrate is bound at residue His-131. Pyridoxal 5'-phosphate contacts are provided by Ser-177, His-205, and Thr-234. The residue at position 237 (Lys-237) is an N6-(pyridoxal phosphate)lysine. Residue Thr-351 participates in substrate binding.

Belongs to the class-II pyridoxal-phosphate-dependent aminotransferase family. BioF subfamily. Homodimer. The cofactor is pyridoxal 5'-phosphate.

It carries out the reaction 6-carboxyhexanoyl-[ACP] + L-alanine + H(+) = (8S)-8-amino-7-oxononanoate + holo-[ACP] + CO2. It functions in the pathway cofactor biosynthesis; biotin biosynthesis. Functionally, catalyzes the decarboxylative condensation of pimeloyl-[acyl-carrier protein] and L-alanine to produce 8-amino-7-oxononanoate (AON), [acyl-carrier protein], and carbon dioxide. This is 8-amino-7-oxononanoate synthase from Methylococcus capsulatus (strain ATCC 33009 / NCIMB 11132 / Bath).